Consider the following 371-residue polypeptide: UDP-N-acetylglucosamine--N-acetylmuramyl-(pentapeptide) pyrophosphoryl-undecaprenol N-acetylglucosamine transferase (371 aa).

Residues 10 to 12 (TGG), N124, R165, S197, I251, and Q296 each bind UDP-N-acetyl-alpha-D-glucosamine.

This sequence belongs to the glycosyltransferase 28 family. MurG subfamily.

It is found in the cell membrane. It carries out the reaction di-trans,octa-cis-undecaprenyl diphospho-N-acetyl-alpha-D-muramoyl-L-alanyl-D-glutamyl-meso-2,6-diaminopimeloyl-D-alanyl-D-alanine + UDP-N-acetyl-alpha-D-glucosamine = di-trans,octa-cis-undecaprenyl diphospho-[N-acetyl-alpha-D-glucosaminyl-(1-&gt;4)]-N-acetyl-alpha-D-muramoyl-L-alanyl-D-glutamyl-meso-2,6-diaminopimeloyl-D-alanyl-D-alanine + UDP + H(+). It functions in the pathway cell wall biogenesis; peptidoglycan biosynthesis. Its function is as follows. Cell wall formation. Catalyzes the transfer of a GlcNAc subunit on undecaprenyl-pyrophosphoryl-MurNAc-pentapeptide (lipid intermediate I) to form undecaprenyl-pyrophosphoryl-MurNAc-(pentapeptide)GlcNAc (lipid intermediate II). This is UDP-N-acetylglucosamine--N-acetylmuramyl-(pentapeptide) pyrophosphoryl-undecaprenol N-acetylglucosamine transferase from Carboxydothermus hydrogenoformans (strain ATCC BAA-161 / DSM 6008 / Z-2901).